The following is a 577-amino-acid chain: Glucose-6-phosphate 1-dehydrogenase, chloroplastic (577 aa).

Positions 1–20 are disordered; sequence MGVQLRLNPCSSSSAATSPS. Residues 1–63 constitute a chloroplast transit peptide; that stretch reads MGVQLRLNPC…QPRKHFEVFS (63 aa). Over residues 11-20 the composition is skewed to low complexity; the sequence is SSSSAATSPS. Residues 97–104 and R131 each bind NADP(+); that span reads GASGDLAK. Cysteines 149 and 157 form a disulfide. K234 serves as a coordination point for NADP(+). D-glucose 6-phosphate is bound by residues K234, 264 to 268, E302, and D321; that span reads HYLGK. H326 acts as the Proton acceptor in catalysis. K419 contacts NADP(+). Residues K422 and K427 each coordinate D-glucose 6-phosphate. NADP(+)-binding residues include R428, R432, and R461. Q463 provides a ligand contact to D-glucose 6-phosphate. Residues 469–471 and R554 contribute to the NADP(+) site; that span reads YLK.

This sequence belongs to the glucose-6-phosphate dehydrogenase family. In terms of assembly, homodimer. Green tissues, leaves and chloroplasts.

The protein localises to the plastid. The protein resides in the chloroplast. It catalyses the reaction D-glucose 6-phosphate + NADP(+) = 6-phospho-D-glucono-1,5-lactone + NADPH + H(+). Its pathway is carbohydrate degradation; pentose phosphate pathway; D-ribulose 5-phosphate from D-glucose 6-phosphate (oxidative stage): step 1/3. With respect to regulation, regulated by metabolites. Post-translationally inactivated by cysteine-mediated redox modification via the ferredoxin-thioredoxin system in the light and this avoids futile cycles with photosynthetic CO2 fixation. Functionally, catalyzes the rate-limiting step of the oxidative pentose-phosphate pathway, which represents a route for the dissimilation of carbohydrates besides glycolysis. The main function of this enzyme is to provide reducing power (NADPH) and pentose phosphates for fatty acid and nucleic acid synthesis which are involved in membrane synthesis and cell division. The chain is Glucose-6-phosphate 1-dehydrogenase, chloroplastic from Solanum tuberosum (Potato).